Consider the following 70-residue polypeptide: Chondroitin proteoglycan 9 (70 aa).

Residues 1-19 (MNFWHLLLLAVLFFVTVFG) form the signal peptide. Residues Ser25 and Ser27 are each glycosylated (O-linked (Xyl...) (chondroitin sulfate) serine).

This Caenorhabditis briggsae protein is Chondroitin proteoglycan 9 (cpg-9).